A 629-amino-acid chain; its full sequence is tRNA uridine 5-carboxymethylaminomethyl modification enzyme MnmG (629 aa).

Residues Gly13–Gly18, Val125, and Ser180 contribute to the FAD site. Position 273 to 287 (Gly273 to Phe287) interacts with NAD(+). Gln370 is a binding site for FAD.

The protein belongs to the MnmG family. In terms of assembly, homodimer. Heterotetramer of two MnmE and two MnmG subunits. The cofactor is FAD.

The protein resides in the cytoplasm. NAD-binding protein involved in the addition of a carboxymethylaminomethyl (cmnm) group at the wobble position (U34) of certain tRNAs, forming tRNA-cmnm(5)s(2)U34. This chain is tRNA uridine 5-carboxymethylaminomethyl modification enzyme MnmG, found in Enterobacter sp. (strain 638).